The sequence spans 173 residues: VQ motif-containing protein 31 (173 aa).

Positions 27 to 36 match the VQ motif; the sequence is FREIVQRLTG. Residue T46 is modified to Phosphothreonine. Disordered regions lie at residues 76–105 and 143–173; these read EIVK…TSPV and LHPS…SGKP. The segment covering 86–105 has biased composition (polar residues); sequence PTGTTPSSKSGNTNLLTSPV. Residues S92, S103, S146, and S149 each carry the phosphoserine modification. Residues 154–165 are compositionally biased toward low complexity; sequence TEPELLTLFPLT. T165 bears the Phosphothreonine mark. Residues S166 and S170 each carry the phosphoserine modification.

Post-translationally, phosphorylated on serine and threonine residues by MPK6.

Its subcellular location is the nucleus. Functionally, may modulate WRKY transcription factor activities. This chain is VQ motif-containing protein 31, found in Arabidopsis thaliana (Mouse-ear cress).